Reading from the N-terminus, the 388-residue chain is Chorismate synthase (388 aa).

NADP(+) contacts are provided by Arg-39 and Arg-45. FMN contacts are provided by residues 132–134 (RSS), 251–252 (NA), Gly-296, 311–315 (KPIPT), and Arg-337.

This sequence belongs to the chorismate synthase family. As to quaternary structure, homotetramer. It depends on FMNH2 as a cofactor.

The enzyme catalyses 5-O-(1-carboxyvinyl)-3-phosphoshikimate = chorismate + phosphate. It functions in the pathway metabolic intermediate biosynthesis; chorismate biosynthesis; chorismate from D-erythrose 4-phosphate and phosphoenolpyruvate: step 7/7. Functionally, catalyzes the anti-1,4-elimination of the C-3 phosphate and the C-6 proR hydrogen from 5-enolpyruvylshikimate-3-phosphate (EPSP) to yield chorismate, which is the branch point compound that serves as the starting substrate for the three terminal pathways of aromatic amino acid biosynthesis. This reaction introduces a second double bond into the aromatic ring system. The chain is Chorismate synthase from Staphylococcus aureus (strain COL).